Consider the following 153-residue polypeptide: Ribosome maturation factor RimP (153 aa).

This sequence belongs to the RimP family.

The protein localises to the cytoplasm. Functionally, required for maturation of 30S ribosomal subunits. This chain is Ribosome maturation factor RimP, found in Clostridium botulinum (strain ATCC 19397 / Type A).